The primary structure comprises 576 residues: Cyclic nucleotide-binding domain-containing protein 2 (576 aa).

Residue 116–239 (SYRNYAEPLQ…DAQYRFEFFR (124 aa)) coordinates a nucleoside 3',5'-cyclic phosphate.

Its subcellular location is the cytoplasm. It is found in the cytosol. Its function is as follows. Essential for male fertility. Plays an important role in spermatogenesis and regulates sperm motility by controlling the development of the flagellar bending of sperm. The protein is Cyclic nucleotide-binding domain-containing protein 2 (CNBD2) of Homo sapiens (Human).